The chain runs to 433 residues: Probable RNA 3'-terminal phosphate cyclase (433 aa).

Positions 1–10 (MGKNKNYNKN) are enriched in low complexity. The segment at 1–28 (MGKNKNYNKNQFKKSKTNNDTTVAQQQQ) is disordered. Residues 18–28 (NNDTTVAQQQQ) are compositionally biased toward polar residues. ATP is bound by residues Q137 and 328 to 332 (YLQDQ). H354 serves as the catalytic Tele-AMP-histidine intermediate. Positions 400–433 (LNNNNNNSNSNTTTTTTTTTISTTTIDNQNSEEK) are disordered. Residues 401-425 (NNNNNNSNSNTTTTTTTTTISTTTI) show a composition bias toward low complexity.

Belongs to the RNA 3'-terminal cyclase family. Type 1 subfamily.

The protein resides in the nucleus. Its subcellular location is the nucleoplasm. The enzyme catalyses a 3'-end 3'-phospho-ribonucleotide-RNA + ATP = a 3'-end 2',3'-cyclophospho-ribonucleotide-RNA + AMP + diphosphate. Its function is as follows. Catalyzes the conversion of 3'-phosphate to a 2',3'-cyclic phosphodiester at the end of RNA. The mechanism of action of the enzyme occurs in 3 steps: (A) adenylation of the enzyme by ATP; (B) transfer of adenylate to an RNA-N3'P to produce RNA-N3'PP5'A; (C) and attack of the adjacent 2'-hydroxyl on the 3'-phosphorus in the diester linkage to produce the cyclic end product. The biological role of this enzyme is unknown but it is likely to function in some aspects of cellular RNA processing. The polypeptide is Probable RNA 3'-terminal phosphate cyclase (rtca) (Dictyostelium discoideum (Social amoeba)).